Consider the following 233-residue polypeptide: Demethylmenaquinone methyltransferase (233 aa).

Residues threonine 60, aspartate 81, and 106–107 (DA) each bind S-adenosyl-L-methionine.

The protein belongs to the class I-like SAM-binding methyltransferase superfamily. MenG/UbiE family.

The enzyme catalyses a 2-demethylmenaquinol + S-adenosyl-L-methionine = a menaquinol + S-adenosyl-L-homocysteine + H(+). It participates in quinol/quinone metabolism; menaquinone biosynthesis; menaquinol from 1,4-dihydroxy-2-naphthoate: step 2/2. Functionally, methyltransferase required for the conversion of demethylmenaquinol (DMKH2) to menaquinol (MKH2). This Staphylococcus saprophyticus subsp. saprophyticus (strain ATCC 15305 / DSM 20229 / NCIMB 8711 / NCTC 7292 / S-41) protein is Demethylmenaquinone methyltransferase.